A 212-amino-acid polypeptide reads, in one-letter code: ER lumen protein-retaining receptor 1-A (212 aa).

Residues 1–4 (MNIF) are Lumenal-facing. A helical transmembrane segment spans residues 5-24 (RFLGDISHLSAIFILLLKIW). Topologically, residues 25–32 (KSRSCAGI) are cytoplasmic. The helical transmembrane segment at 33 to 52 (SGKSQLLFAIVFTARYLDLF) threads the bilayer. Positions 47-48 (RY) are interaction with the K-D-E-L motif on target proteins. Over 53–58 (TNYISF) the chain is Lumenal. A helical transmembrane segment spans residues 59 to 79 (YNTSMKVVYVASSYATVWMIY). Residues 80–92 (SKFKATYDGNHDT) lie on the Cytoplasmic side of the membrane. A helical transmembrane segment spans residues 93-110 (FRVEFLIVPTAILAFLVN). The Lumenal portion of the chain corresponds to 111–116 (HDFTPL). Residues 117-135 (EIFWTFSIYLESVAILPQL) form a helical membrane-spanning segment. Residues 136-149 (FMVSKTGEAETITS) lie on the Cytoplasmic side of the membrane. Residues 150-168 (HYLFALGIYRTLYLFNWIW) form a helical membrane-spanning segment. An interaction with the K-D-E-L motif on target proteins region spans residues 159–169 (RTLYLFNWIWR). Over 169–178 (RYQFEGFFDL) the chain is Lumenal. A helical transmembrane segment spans residues 179–199 (IAIVAGLVQTVLYCDFFYLYV). The Cytoplasmic portion of the chain corresponds to 200 to 212 (TKVLKGKKLSLPA). Positions 204–207 (KGKK) are important for recycling of cargo proteins with the sequence motif K-D-E-L from the Golgi to the endoplasmic reticulum.

The protein belongs to the ERD2 family.

It localises to the golgi apparatus membrane. It is found in the cytoplasmic vesicle. The protein resides in the COPI-coated vesicle membrane. The protein localises to the endoplasmic reticulum membrane. Its subcellular location is the endoplasmic reticulum-Golgi intermediate compartment membrane. Functionally, receptor for the C-terminal sequence motif K-D-E-L that is present on endoplasmic reticulum resident proteins and that mediates their recycling from the Golgi back to the endoplasmic reticulum. This chain is ER lumen protein-retaining receptor 1-A (kdelr1-a), found in Xenopus laevis (African clawed frog).